Consider the following 198-residue polypeptide: Carnitine operon protein CaiE (198 aa).

The tract at residues 179–198 is disordered; the sequence is VEENRPRLKGTTDVKPKSAQ. Positions 180-198 are enriched in basic and acidic residues; it reads EENRPRLKGTTDVKPKSAQ.

This sequence belongs to the transferase hexapeptide repeat family.

It functions in the pathway amine and polyamine metabolism; carnitine metabolism. Its function is as follows. Overproduction of CaiE stimulates the activity of CaiB and CaiD. The chain is Carnitine operon protein CaiE from Salmonella typhi.